Here is a 508-residue protein sequence, read N- to C-terminus: Maturase K (508 aa).

Belongs to the intron maturase 2 family. MatK subfamily.

Its subcellular location is the plastid. The protein resides in the chloroplast. Functionally, usually encoded in the trnK tRNA gene intron. Probably assists in splicing its own and other chloroplast group II introns. The polypeptide is Maturase K (Cunninghamia lanceolata (China fir)).